The sequence spans 118 residues: Small ribosomal subunit protein uS13 (118 aa).

The tract at residues 94 to 118 (SLPLRGQRTKTNARTRKGPRKPIKK) is disordered.

It belongs to the universal ribosomal protein uS13 family. As to quaternary structure, part of the 30S ribosomal subunit. Forms a loose heterodimer with protein S19. Forms two bridges to the 50S subunit in the 70S ribosome.

In terms of biological role, located at the top of the head of the 30S subunit, it contacts several helices of the 16S rRNA. In the 70S ribosome it contacts the 23S rRNA (bridge B1a) and protein L5 of the 50S subunit (bridge B1b), connecting the 2 subunits; these bridges are implicated in subunit movement. Contacts the tRNAs in the A and P-sites. The sequence is that of Small ribosomal subunit protein uS13 from Vibrio parahaemolyticus serotype O3:K6 (strain RIMD 2210633).